Here is a 431-residue protein sequence, read N- to C-terminus: uncharacterized protein (431 aa).

4Fe-4S ferredoxin-type domains are found at residues 336–367 (VRPVHHPERCTDCAVCLAARRCPTHAIDNGLD) and 362–391 (IDNGLDLDRCFGCGVCAWSCPSGAYEMDTG).

This is an uncharacterized protein from Methanothermobacter thermautotrophicus (strain ATCC 29096 / DSM 1053 / JCM 10044 / NBRC 100330 / Delta H) (Methanobacterium thermoautotrophicum).